Reading from the N-terminus, the 299-residue chain is Pentalenolactone F synthase (299 aa).

H105 and D107 together coordinate Fe cation. 2-oxoglutarate contacts are provided by T133 and W251. H266 contacts Fe cation. R277 contacts 2-oxoglutarate.

The protein belongs to the TfdA dioxygenase family. It depends on Fe(2+) as a cofactor.

The enzyme catalyses pentalenolactone D + 2 2-oxoglutarate + 2 O2 = pentalenolactone F + 2 succinate + 2 CO2 + H2O. The protein operates within antibiotic biosynthesis; pentalenolactone biosynthesis. Its activity is regulated as follows. Activated by ascorbate. Functionally, catalyzes the Fe(2+) and alpha-ketoglutarate-dependent oxidation of pentalenolactone D to pentalenolactone F in the biosynthesis of pentalenolactone antibiotic. Also able to catalyze the oxidation of pentalenolactone D to pentalenolactone E. In Streptomyces arenae, this protein is Pentalenolactone F synthase (pntD).